The chain runs to 435 residues: Legumain (435 aa).

A signal peptide spans M1 to A17. Residue N93 is glycosylated (N-linked (GlcNAc...) asparagine). H150 is a catalytic residue. Residue N169 is glycosylated (N-linked (GlcNAc...) asparagine). Residue C191 is the Nucleophile of the active site. N-linked (GlcNAc...) asparagine glycosylation is found at N265 and N274. Positions D326–Y435 are excised as a propeptide. 2 disulfides stabilise this stretch: C380–C414 and C392–C431.

This sequence belongs to the peptidase C13 family. Homodimer before autocatalytic removal of the propeptide. Monomer after autocatalytic processing. May interact with integrins. Glycosylated. Post-translationally, activated by autocatalytic processing at pH 4. Detected in kidney proximal tubules (at protein level). Ubiquitous. Particularly abundant in kidney and placenta.

It localises to the lysosome. It catalyses the reaction Hydrolysis of proteins and small molecule substrates at -Asn-|-Xaa- bonds.. Its activity is regulated as follows. Inhibited by cystatin-C. Functionally, has a strict specificity for hydrolysis of asparaginyl bonds. Can also cleave aspartyl bonds slowly, especially under acidic conditions. Involved in the processing of proteins for MHC class II antigen presentation in the lysosomal/endosomal system. Also involved in MHC class I antigen presentation in cross-presenting dendritic cells by mediating cleavage and maturation of Perforin-2 (MPEG1), thereby promoting antigen translocation in the cytosol. Required for normal lysosomal protein degradation in renal proximal tubules. Required for normal degradation of internalized EGFR. Plays a role in the regulation of cell proliferation via its role in EGFR degradation. In Mus musculus (Mouse), this protein is Legumain (Lgmn).